We begin with the raw amino-acid sequence, 367 residues long: CCN family member 4 (367 aa).

The N-terminal stretch at 1 to 22 is a signal peptide; that stretch reads MRWLLPWTLAAVAVLRVGNILA. The IGFBP N-terminal domain occupies 45-118; the sequence is RPEFCKWPCE…RYAIGVCAQV (74 aa). Cystine bridges form between Cys49-Cys73, Cys53-Cys75, Cys55-Cys76, and Cys62-Cys79. Asn86 carries N-linked (GlcNAc...) asparagine glycosylation. 2 disulfide bridges follow: Cys87–Cys101 and Cys93–Cys115. Residues 121-186 enclose the VWFC domain; that stretch reads VGCVLDGVRY…GQCCEQWVCD (66 aa). An N-linked (GlcNAc...) asparagine glycan is attached at Asn143. Residues 215–260 enclose the TSP type-1 domain; sequence NCIAYTSPWSPCSTTCGLGISTRISNVNARCWPEQESRLCNLRPCD. Intrachain disulfides connect Cys273-Cys310, Cys290-Cys324, Cys301-Cys340, Cys304-Cys342, and Cys309-Cys346. In terms of domain architecture, CTCK spans 273 to 347; it reads CLAVYQPEEA…NACFCNLSCR (75 aa). Asn284 carries N-linked (GlcNAc...) asparagine glycosylation. Asn343 is a glycosylation site (N-linked (GlcNAc...) asparagine).

The protein belongs to the CCN family. In terms of tissue distribution, highly expressed in kidney and lung. Lower levels in heart, brain, spleen, liver, skeletal muscle and testis. Expressed in low metastatic melanoma cells.

It is found in the secreted. In terms of biological role, downstream regulator in the Wnt/Frizzled-signaling pathway. Associated with cell survival. Adheres to skin and melanoma fibroblasts. In vitro binding to skin fibroblasts occurs through the proteoglycans, decorin and biglycan. Suppresses tumor growth in vivo. In Mus musculus (Mouse), this protein is CCN family member 4 (Ccn4).